We begin with the raw amino-acid sequence, 315 residues long: WD repeat domain-containing protein 83 (315 aa).

WD repeat units follow at residues 23 to 62 (CGQGAVRAVRFNVDGNYCLTCGSDKTLKLWNPLRGTLLRT), 65 to 104 (GHGYEVLDAAGSFDNSSLCSGGGDKAVVLWDVASGQVVRK), 107 to 146 (GHAGKVNTVQFNEEATVILSGSIDSSIRCWDCRSRRPEPV), 151 to 188 (EARDGVSSVKVSDHEILAGSVDGRVRRYDLRMGQLFSD), 190 to 228 (VGSPITCTCFSRDGQCTLVSSLDSTLRLLDKDTGELLGE), 231 to 272 (GHKN…LALA), and 275 to 313 (VGSGVVQSLAYHPTEPCLLTAMGGSVQCWREEAYEAEDG).

It belongs to the WD repeat MORG1 family. As to quaternary structure, interacts with EGLN3/PHD3. Interacts with ERK signaling proteins MAP2K1/MEK1, MAP2K2/MEK2, LAMTOR3, ARAF/Raf-1, MAPK1/ERK2 and MAPK3/ERK1. Identified in the spliceosome C complex. Interacts with PARD6B and CRB3. Interacts strongly with GTP-bound RRAGA but not with inactive GDP-bound. Interacts with p62/SQSTM1.

It localises to the cytoplasm. The protein resides in the lysosome. The protein localises to the nucleus. Molecular scaffold protein for various multimeric protein complexes. Acts as a module in the assembly of a multicomponent scaffold for the ERK pathway, linking ERK responses to specific agonists. At low concentrations it enhances ERK activation, whereas high concentrations lead to the inhibition of ERK activation. Also involved in response to hypoxia by acting as a negative regulator of HIF1A/HIF-1-alpha via its interaction with EGLN3/PHD3. May promote degradation of HIF1A. May act by recruiting signaling complexes to a specific upstream activator. May also be involved in pre-mRNA splicing. Participates in tight junction development by regulating apico-basal polarity, a key step in tissue development and organization. Mechanistically, regulates the translocation of PAR6-aPKC from the cytoplasm to the apical surface by acting as an adapter between PARD6B AND CRB3. Also acts as a negative regulator of mTORC1 under nutrient-rich conditions by binding to the active Rag GTPases to inhibit mTORC1 localization to the lysosome and phosphorylation of downstream targets. This facilitates constitutive basal autophagy during nutrient availability. The sequence is that of WD repeat domain-containing protein 83 (WDR83) from Homo sapiens (Human).